We begin with the raw amino-acid sequence, 88 residues long: Apolipoprotein C-I (88 aa).

Positions 1–26 (MRLFLSLPVLVVVLAMVWEGPAPTQA) are cleaved as a signal peptide.

Belongs to the apolipoprotein C1 family.

It is found in the secreted. In terms of biological role, inhibitor of lipoprotein binding to the low density lipoprotein (LDL) receptor, LDL receptor-related protein, and very low density lipoprotein (VLDL) receptor. Associates with high density lipoproteins (HDL) and the triacylglycerol-rich lipoproteins in the plasma and makes up about 10% of the protein of the VLDL and 2% of that of HDL. Appears to interfere directly with fatty acid uptake and is also the major plasma inhibitor of cholesteryl ester transfer protein (CETP). Binds free fatty acids and reduces their intracellular esterification. Modulates the interaction of APOE with beta-migrating VLDL and inhibits binding of beta-VLDL to the LDL receptor-related protein. The sequence is that of Apolipoprotein C-I (APOC1) from Neomonachus schauinslandi (Hawaiian monk seal).